The chain runs to 335 residues: Autophagy-related protein 21 (335 aa).

WD repeat units follow at residues 165-205 (CHSS…LVTE) and 210-249 (YIPA…SDPN).

The protein belongs to the WD repeat PROPPIN family.

Its subcellular location is the cytoplasm. The protein resides in the golgi apparatus. The protein localises to the golgi stack membrane. It is found in the vacuole membrane. It localises to the preautophagosomal structure membrane. Its function is as follows. Required for cytoplasm to vacuole transport (Cvt) vesicles formation and autophagy. Has a role in sporulation. This is Autophagy-related protein 21 (mug179) from Schizosaccharomyces pombe (strain 972 / ATCC 24843) (Fission yeast).